Consider the following 365-residue polypeptide: 3-isopropylmalate dehydrogenase (365 aa).

80–91 (GPKWGTGAVRPE) is an NAD(+) binding site. Substrate-binding residues include arginine 98, arginine 108, arginine 137, and aspartate 226. The Mg(2+) site is built by aspartate 226, aspartate 251, and aspartate 255. Position 290-301 (290-301 (GSAPDLPKGKVN)) interacts with NAD(+).

It belongs to the isocitrate and isopropylmalate dehydrogenases family. As to quaternary structure, homodimer. Mg(2+) is required as a cofactor. It depends on Mn(2+) as a cofactor.

Its subcellular location is the cytoplasm. It catalyses the reaction (2R,3S)-3-isopropylmalate + NAD(+) = 4-methyl-2-oxopentanoate + CO2 + NADH. The protein operates within amino-acid biosynthesis; L-leucine biosynthesis; L-leucine from 3-methyl-2-oxobutanoate: step 3/4. In terms of biological role, catalyzes the oxidation of 3-carboxy-2-hydroxy-4-methylpentanoate (3-isopropylmalate) to 3-carboxy-4-methyl-2-oxopentanoate. The product decarboxylates to 4-methyl-2 oxopentanoate. This Candida glabrata (strain ATCC 2001 / BCRC 20586 / JCM 3761 / NBRC 0622 / NRRL Y-65 / CBS 138) (Yeast) protein is 3-isopropylmalate dehydrogenase (LEU2).